A 627-amino-acid polypeptide reads, in one-letter code: uncharacterized protein (627 aa).

Disordered stretches follow at residues E57–D82, P96–G121, G160–Y184, A198–G232, S247–P277, R335–Y358, and V449–S579. Residues S169 to A183 show a composition bias toward low complexity. A compositionally biased stretch (low complexity) spans Q336–A357. Positions F450–A464 are enriched in basic and acidic residues.

This is an uncharacterized protein from Treponema pallidum (strain Nichols).